Reading from the N-terminus, the 237-residue chain is NAD-dependent protein deacylase (237 aa).

The Deacetylase sirtuin-type domain occupies 1-235; that stretch reads MRIAVLSGAG…PGLLQRLPAL (235 aa). Position 8 to 28 (8 to 28) interacts with NAD(+); the sequence is GAGISAESGVPTFRDDKNGLW. 2 residues coordinate substrate: Y53 and R56. 86–89 lines the NAD(+) pocket; the sequence is QNVD. H104 serves as the catalytic Proton acceptor. Positions 112, 115, 138, and 140 each coordinate Zn(2+). NAD(+) is bound by residues 177–179, 203–205, and A221; these read GTS and NPE.

This sequence belongs to the sirtuin family. Class III subfamily. The cofactor is Zn(2+).

The protein localises to the cytoplasm. The catalysed reaction is N(6)-acetyl-L-lysyl-[protein] + NAD(+) + H2O = 2''-O-acetyl-ADP-D-ribose + nicotinamide + L-lysyl-[protein]. It catalyses the reaction N(6)-succinyl-L-lysyl-[protein] + NAD(+) + H2O = 2''-O-succinyl-ADP-D-ribose + nicotinamide + L-lysyl-[protein]. In terms of biological role, NAD-dependent lysine deacetylase and desuccinylase that specifically removes acetyl and succinyl groups on target proteins. Modulates the activities of several proteins which are inactive in their acylated form. This chain is NAD-dependent protein deacylase, found in Mycolicibacterium paratuberculosis (strain ATCC BAA-968 / K-10) (Mycobacterium paratuberculosis).